The following is a 142-amino-acid chain: MSTPSVQTFGKKKTATAVAHVKAGKGLIKVNGAPITLVQPEILRFKVYEPLTLVGLDKFQNIDIRVKVSGGGHVSQVYAIRQAIAKGLVAYHQKFVDEASKNELKKVFASYDKTLLVADSRRMEPKKFGGRGARARFQKSYR.

Belongs to the universal ribosomal protein uS9 family.

The polypeptide is Small ribosomal subunit protein uS9 (RPS16) (Debaryomyces hansenii (strain ATCC 36239 / CBS 767 / BCRC 21394 / JCM 1990 / NBRC 0083 / IGC 2968) (Yeast)).